The chain runs to 425 residues: Histidine--tRNA ligase 1 (425 aa).

Belongs to the class-II aminoacyl-tRNA synthetase family. Homodimer.

The protein resides in the cytoplasm. The enzyme catalyses tRNA(His) + L-histidine + ATP = L-histidyl-tRNA(His) + AMP + diphosphate + H(+). This is Histidine--tRNA ligase 1 from Bacillus cereus (strain ZK / E33L).